The chain runs to 341 residues: GTP 3',8-cyclase (341 aa).

In terms of domain architecture, Radical SAM core spans 11–231; the sequence is KRERPLRDLR…DLINQHMPTE (221 aa). GTP is bound at residue arginine 20. [4Fe-4S] cluster contacts are provided by cysteine 27 and cysteine 31. Position 33 (tyrosine 33) interacts with S-adenosyl-L-methionine. Cysteine 34 is a [4Fe-4S] cluster binding site. Arginine 75 provides a ligand contact to GTP. Residue glycine 79 participates in S-adenosyl-L-methionine binding. Threonine 106 contributes to the GTP binding site. Position 130 (serine 130) interacts with S-adenosyl-L-methionine. Lysine 167 is a GTP binding site. Methionine 201 is an S-adenosyl-L-methionine binding site. [4Fe-4S] cluster is bound by residues cysteine 265 and cysteine 268. 270-272 provides a ligand contact to GTP; that stretch reads RAR. Residue cysteine 282 coordinates [4Fe-4S] cluster.

Belongs to the radical SAM superfamily. MoaA family. As to quaternary structure, monomer and homodimer. Requires [4Fe-4S] cluster as cofactor.

It catalyses the reaction GTP + AH2 + S-adenosyl-L-methionine = (8S)-3',8-cyclo-7,8-dihydroguanosine 5'-triphosphate + 5'-deoxyadenosine + L-methionine + A + H(+). Its pathway is cofactor biosynthesis; molybdopterin biosynthesis. Functionally, catalyzes the cyclization of GTP to (8S)-3',8-cyclo-7,8-dihydroguanosine 5'-triphosphate. In Bacillus velezensis (strain DSM 23117 / BGSC 10A6 / LMG 26770 / FZB42) (Bacillus amyloliquefaciens subsp. plantarum), this protein is GTP 3',8-cyclase.